Here is a 264-residue protein sequence, read N- to C-terminus: H-2 class II histocompatibility antigen, E-B beta chain (264 aa).

The first 26 residues, 1–26, serve as a signal peptide directing secretion; that stretch reads MVWLPRVPCVAAVILLLTVLSPPMAL. A beta-1 region spans residues 27–121; sequence VRDSRPWFLE…ISDKFLVRRR (95 aa). Residues 27 to 225 are Extracellular-facing; that stretch reads VRDSRPWFLE…KAQSTSAQNK (199 aa). 2 disulfide bridges follow: cysteine 38–cysteine 106 and cysteine 144–cysteine 200. An N-linked (GlcNAc...) asparagine glycan is attached at asparagine 46. The segment at 122 to 225 is beta-2; sequence VEPTVTVYPT…KAQSTSAQNK (104 aa). In terms of domain architecture, Ig-like C1-type spans 124-214; that stretch reads PTVTVYPTKT…PSLTDPVTVE (91 aa). A helical transmembrane segment spans residues 226–246; that stretch reads MLSGVGGFVLGLLFLGAGLFI. The Cytoplasmic segment spans residues 247 to 264; the sequence is YFRNQKGQSGLQPTGLLS.

The protein belongs to the MHC class II family. Post-translationally, ubiquitinated in immature dendritic cells leading to down-regulation of MHC class II.

Its subcellular location is the membrane. The protein is H-2 class II histocompatibility antigen, E-B beta chain (H2-Eb1) of Mus musculus (Mouse).